The primary structure comprises 874 residues: Adhesion G-protein coupled receptor D1 (874 aa).

An N-terminal signal peptide occupies residues 1-25 (MEKLLRLCCWYSWLLLFYYNFQVRG). Residues 26 to 567 (VYSRSQDHPG…LARGHQVALS (542 aa)) lie on the Extracellular side of the membrane. The 198-residue stretch at 79 to 276 (KGVTLLYYGR…ASPVMPTDAY (198 aa)) folds into the Pentraxin (PTX) domain. 9 N-linked (GlcNAc...) asparagine glycosylation sites follow: Asn90, Asn185, Asn282, Asn302, Asn319, Asn394, Asn476, Asn501, and Asn533. The GAIN-B domain occupies 371-557 (QVTVEGSSAM…AILMQVVPLE (187 aa)). 2 cysteine pairs are disulfide-bonded: Cys510-Cys539 and Cys527-Cys541. Residues 510–557 (CAFLDFSSGEGVWSNHGCALTRGNLTYSVCRCTHLTNFAILMQVVPLE) form a GPS region. Positions 546–554 (NFAILMQVV) are stachel. 17beta-hydroxy-5alpha-androstan-3-one is bound at residue Gln563. A helical membrane pass occupies residues 568-590 (SISYVGCSLSVLCLVATLVTFAV). The Cytoplasmic segment spans residues 591–601 (LSSVSTIRNQR). Residues 602–623 (YHIHANLSFAVLVAQVLLLISF) traverse the membrane as a helical segment. The Extracellular segment spans residues 624-632 (RLEPGTTPC). Cys632 and Cys704 are joined by a disulfide. A helical membrane pass occupies residues 633-655 (QVMAVLLHYFFLSAFAWMLVEGL). The Cytoplasmic segment spans residues 656 to 673 (HLYSMVIKVFGSEDSKHR). A helical membrane pass occupies residues 674-695 (YYYGMGWGFPLLICIISLSFAM). At 696 to 710 (DSYGTSNNCWLSLAS) the chain is on the extracellular side. Residues 711-732 (GAIWAFVAPALFVIVVNIGILI) form a helical membrane-spanning segment. Residues 733-757 (AVTRVISQISADNYKIHGDPSAFKL) lie on the Cytoplasmic side of the membrane. Residues 758 to 780 (TAKAVAVLLPILGTSWVFGVLAV) form a helical membrane-spanning segment. The Extracellular segment spans residues 781-783 (NGC). The chain crosses the membrane as a helical span at residues 784-810 (AVVFQYMFATLNSLQGLFIFLFHCLLN). Residue Asn795 coordinates 17beta-hydroxy-5alpha-androstan-3-one. Residues 811–874 (SEVRAAFKHK…SAHRVDLSAV (64 aa)) are Cytoplasmic-facing. Residues 854–874 (TKLSPWDKSSHSAHRVDLSAV) are disordered. The span at 861–874 (KSSHSAHRVDLSAV) shows a compositional bias: basic and acidic residues.

The protein belongs to the G-protein coupled receptor 2 family. Adhesion G-protein coupled receptor (ADGR) subfamily. As to quaternary structure, heterodimer of 2 chains generated by proteolytic processing; the large extracellular N-terminal fragment and the membrane-bound C-terminal fragment predominantly remain associated and non-covalently linked. Interacts with ESYT1; interaction takes place in absence of cytosolic calcium and inhibits the G protein-coupled receptor activity of ADGRD1. In terms of processing, autoproteolytically processed at the GPS region of the GAIN-B domain; this cleavage modulates receptor activity. Cleavage takes place early in the secretory pathway before N-glycosylation. Up-regulated in CD133(+) cell population of glioblastoma.

The protein localises to the cell membrane. Its activity is regulated as follows. Forms a heterodimer of 2 chains generated by proteolytic processing that remain associated through non-covalent interactions mediated by the GAIN-B domain. In the inactivated receptor, the Stachel sequence (also named stalk) is embedded in the GAIN-B domain, where it adopts a beta-strand conformation. On activation, the Stachel moves into the 7 transmembrane region and adopts a twisted hook-shaped configuration that forms contacts within the receptor, leading to coupling of a G-alpha protein, which activates signaling. The cleaved GAIN-B and N-terminal domains can then dissociate from the rest of the receptor. Interaction with ESYT1 in absence of cytosolic calcium inhibits the G protein-coupled receptor activity; interaction and inhibition is relieved when cytosolic calcium increases. Activated by AP503, a small molecule that activates ADGRD1 without activating androgen nuclear receptors: AP503 enhances muscle strength without eliciting androgenic adverse effects. Activated by the 8E3E8 antibody that targets the N-terminus. Its function is as follows. Adhesion G-protein coupled receptor (aGPCR) for androgen hormone 5alpha-dihydrotestosterone (5alpha-DHT), also named 17beta-hydroxy-5alpha-androstan-3-one, the most potent hormone among androgens. Also activated by methenolone drug. Ligand binding causes a conformation change that triggers signaling via guanine nucleotide-binding proteins (G proteins) and modulates the activity of downstream effectors, such as adenylate cyclase. ADGRD1 is coupled to G(s) G proteins and mediates activation of adenylate cyclase activity. Acts as a 5alpha-DHT receptor in muscle cells, thereby increasing intracellular cyclic AMP (cAMP) levels and enhancing muscle strength. The polypeptide is Adhesion G-protein coupled receptor D1 (Homo sapiens (Human)).